Here is a 610-residue protein sequence, read N- to C-terminus: Elongation factor 4 (610 aa).

Residues 14-198 form the tr-type G domain; sequence ANIRNFSIVA…AIVTRLPPPQ (185 aa). GTP is bound by residues 26 to 31 and 145 to 148; these read DHGKST and NKVD.

It belongs to the TRAFAC class translation factor GTPase superfamily. Classic translation factor GTPase family. LepA subfamily.

It is found in the cell inner membrane. It carries out the reaction GTP + H2O = GDP + phosphate + H(+). Its function is as follows. Required for accurate and efficient protein synthesis under certain stress conditions. May act as a fidelity factor of the translation reaction, by catalyzing a one-codon backward translocation of tRNAs on improperly translocated ribosomes. Back-translocation proceeds from a post-translocation (POST) complex to a pre-translocation (PRE) complex, thus giving elongation factor G a second chance to translocate the tRNAs correctly. Binds to ribosomes in a GTP-dependent manner. In Nitrobacter hamburgensis (strain DSM 10229 / NCIMB 13809 / X14), this protein is Elongation factor 4.